The chain runs to 465 residues: Muscarinic acetylcholine receptor M2 (465 aa).

Over 1–21 (MNNSTNSSNNVALTSPYKTFE) the chain is Extracellular. 3 N-linked (GlcNAc...) asparagine glycosylation sites follow: N2, N3, and N6. Residues 22–44 (VVFIVLVAGSLSLVTIIGNILVM) form a helical membrane-spanning segment. Topologically, residues 45 to 58 (VSIKVNRHLQTVNN) are cytoplasmic. Residues 59–79 (YFLFSLACADLIIGVFSMNLY) form a helical membrane-spanning segment. The Extracellular portion of the chain corresponds to 80 to 96 (TLYTVIGYWPLGPVVCD). The cysteines at positions 95 and 175 are disulfide-linked. A helical transmembrane segment spans residues 97-118 (LWLALDYVVSNASVMNLLIISF). The short motif at 119-121 (DRY) is the Important for signaling element. The Cytoplasmic portion of the chain corresponds to 119-138 (DRYFCVTKPLTYPVKRTTKM). A helical transmembrane segment spans residues 139–161 (AGMMIAAAWVLSFILWAPAILFW). Topologically, residues 162–183 (QFIVGVRTVEDGECYIQFFSNA) are extracellular. Residues 184 to 208 (AVTFGTAIAAFYLPVIIMTVLYWHI) traverse the membrane as a helical segment. At 209-386 (SRASKSRIKK…PPSREKKVTR (178 aa)) the chain is on the cytoplasmic side. Residues 217-319 (KKDKKEPVAN…SVGHSKDENS (103 aa)) form a disordered region. S231 carries the phosphoserine modification. The span at 253 to 269 (GLEHNKIQNGKTPRDAV) shows a compositional bias: basic and acidic residues. 2 stretches are compositionally biased toward polar residues: residues 283-292 (NDSTSVSAVA) and 303-312 (DENTVSTSVG). Residues 387–409 (TILAILLAFIITWAPYNVMVLIN) traverse the membrane as a helical segment. Over 410-417 (TFCAPCIP) the chain is Extracellular. C412 and C415 are oxidised to a cystine. The chain crosses the membrane as a helical span at residues 418–441 (NTVWTIGYWLCYINSTINPACYAL). The short motif at 435–439 (NPACY) is the Important for signaling element. The Cytoplasmic segment spans residues 442 to 465 (CNATFKKTFKHLLMCHYKNIGATR). T445, T449, and T464 each carry phosphothreonine.

The protein belongs to the G-protein coupled receptor 1 family. Muscarinic acetylcholine receptor subfamily. CHRM2 sub-subfamily. In terms of assembly, interacts with ARRB1 and ARRB2. Interacts with RACK1; the interaction regulates CHRM2 internalization. Post-translationally, phosphorylated in response to agonist treatment.

The protein resides in the cell membrane. Its subcellular location is the postsynaptic cell membrane. Its function is as follows. The muscarinic acetylcholine receptor mediates various cellular responses, including inhibition of adenylate cyclase, breakdown of phosphoinositides and modulation of potassium channels through the action of G proteins. Primary transducing effect is adenylate cyclase inhibition. Signaling promotes phospholipase C activity, leading to the release of inositol trisphosphate (IP3); this then triggers calcium ion release into the cytosol. This is Muscarinic acetylcholine receptor M2 (CHRM2) from Bos taurus (Bovine).